The following is a 72-amino-acid chain: Protein CYSTEINE-RICH TRANSMEMBRANE MODULE 1 (72 aa).

Over residues M1–G11 the composition is skewed to polar residues. Residues M1 to E46 form a disordered region. Positions N13–G29 are enriched in pro residues. A helical transmembrane segment spans residues S49–C65.

This sequence belongs to the CYSTM1 family. As to quaternary structure, heterodimers. Binds weakly to CYSTM7 and WIH1/CYSTM13. Mostly expressed in roots, flowers and siliques and, to a lower extent, in stems and leaves.

Its subcellular location is the cell membrane. It localises to the nucleus. Functionally, may be involved in aluminium (Al) tolerance. Involved in resistance to abiotic stress. The sequence is that of Protein CYSTEINE-RICH TRANSMEMBRANE MODULE 1 from Arabidopsis thaliana (Mouse-ear cress).